The primary structure comprises 522 residues: Maturase K (522 aa).

It belongs to the intron maturase 2 family. MatK subfamily.

The protein resides in the plastid. It is found in the chloroplast. Its function is as follows. Usually encoded in the trnK tRNA gene intron. Probably assists in splicing its own and other chloroplast group II introns. In Aristea glauca, this protein is Maturase K.